Here is a 67-residue protein sequence, read N- to C-terminus: Putative cytosolic sulfotransferase 2 (67 aa).

31–33 contacts 3'-phosphoadenylyl sulfate; it reads RDG.

Belongs to the sulfotransferase 1 family.

The protein localises to the cytoplasm. Its function is as follows. Sulfotransferase that utilizes 3'-phospho-5'-adenylyl sulfate (PAPS) as sulfonate donor. This Arabidopsis thaliana (Mouse-ear cress) protein is Putative cytosolic sulfotransferase 2 (SOT2).